A 250-amino-acid chain; its full sequence is ADPR responsive transcriptional repressor NtrR (250 aa).

Positions 26 to 157 constitute a Nudix hydrolase domain; it reads LMTVDMAIFS…DHHDLLQQAF (132 aa). Positions 62-85 match the Nudix box motif; it reads GFVDLEQDQNLMACAHRKLLEKTG. Positions 164–237 are winged helix-like DNA-binding region; sequence TRYTALPISL…RFALQDYDFN (74 aa).

DNA binding is efficiently suppressed in the presence of ADP-ribose (ADPR) or phospho-ADPR. Accumulation of ADPR resulting from NAD degradation may be interpreted by the cell as a signal to activate recycling of nicotinamide. In terms of biological role, involved in the transcriptional regulation of the nondeamidating salvage pathway for production of NAD from nicotinamide. Represses expression of the prs-nadV-nrtR operon by binding to the DNA region located upstream of the operon, thus blocking the nondeamidating pathway. In Acinetobacter baylyi (strain ATCC 33305 / BD413 / ADP1), this protein is ADPR responsive transcriptional repressor NtrR.